A 228-amino-acid polypeptide reads, in one-letter code: Large ribosomal subunit protein bL25 (228 aa).

A disordered region spans residues 196-228 (EEAAVAEAQSAESAEGKAEAEAEATNEKNKSEA). A compositionally biased stretch (basic and acidic residues) spans 209–228 (AEGKAEAEAEATNEKNKSEA).

Belongs to the bacterial ribosomal protein bL25 family. CTC subfamily. In terms of assembly, part of the 50S ribosomal subunit; part of the 5S rRNA/L5/L18/L25 subcomplex. Contacts the 5S rRNA. Binds to the 5S rRNA independently of L5 and L18.

In terms of biological role, this is one of the proteins that binds to the 5S RNA in the ribosome where it forms part of the central protuberance. This chain is Large ribosomal subunit protein bL25, found in Methylorubrum extorquens (strain PA1) (Methylobacterium extorquens).